The primary structure comprises 311 residues: Methionyl-tRNA formyltransferase (311 aa).

109-112 (SLLP) is a (6S)-5,6,7,8-tetrahydrofolate binding site.

Belongs to the Fmt family.

It catalyses the reaction L-methionyl-tRNA(fMet) + (6R)-10-formyltetrahydrofolate = N-formyl-L-methionyl-tRNA(fMet) + (6S)-5,6,7,8-tetrahydrofolate + H(+). Attaches a formyl group to the free amino group of methionyl-tRNA(fMet). The formyl group appears to play a dual role in the initiator identity of N-formylmethionyl-tRNA by promoting its recognition by IF2 and preventing the misappropriation of this tRNA by the elongation apparatus. The protein is Methionyl-tRNA formyltransferase of Solibacter usitatus (strain Ellin6076).